The following is a 66-amino-acid chain: Beta-toxin Cbo2 (66 aa).

The LCN-type CS-alpha/beta domain occupies 1 to 66; that stretch reads KEGYIVNYHD…VWPLPKKTCN (66 aa). Intrachain disulfides connect Cys-12–Cys-65, Cys-16–Cys-41, Cys-25–Cys-46, and Cys-29–Cys-48. Asn-66 carries the asparagine amide modification.

This sequence belongs to the long (4 C-C) scorpion toxin superfamily. Sodium channel inhibitor family. Beta subfamily. As to expression, expressed by the venom gland.

It localises to the secreted. Its function is as follows. Beta toxins bind voltage-independently at site-4 of sodium channels and shift the voltage of activation toward more negative potentials thereby affecting sodium channel activation and promoting spontaneous and repetitive firing. A mixture of Cbo2 and Cbo3 is weakly active on the human voltage-gated sodium channels Nav1.4/SCN4A and Nav1.6/SCN8A when tested at 200 nM. In vivo, is toxic to mice when intraperitoneally injected. This Centruroides bonito (Scorpion) protein is Beta-toxin Cbo2.